We begin with the raw amino-acid sequence, 346 residues long: Tripartite motif-containing protein 44 (346 aa).

A disordered region spans residues 68 to 167; the sequence is TPPASGGDDA…ETEAESEFDP (100 aa). Residues 89–167 show a composition bias toward acidic residues; it reads EGEVESEVGE…ETEAESEFDP (79 aa). Residues 176–217 form a B box-type zinc finger; it reads VAKRKCPDHGLDLSTYCQEDRQLICVLCPVIGAHRGHQLSTL. Positions 181, 184, 203, and 209 each coordinate Zn(2+). The stretch at 292-327 forms a coiled coil; it reads AHVTEILADIQSHMDRLMTQMAQAKEQLDTSNESAE. Residues 313–346 form a disordered region; sequence AQAKEQLDTSNESAEPKAEGDEEGPSGASEEEDT. Positions 332–346 are enriched in acidic residues; that stretch reads GDEEGPSGASEEEDT. A phosphoserine mark is found at S338 and S341.

Interacts (via coiled coil) with TRIM17 (via coiled coil). Expressed mainly in brain with high level in cerebral hemispheres and cerebellum. Lower expression in kidney, lung and spleen. In brain is detected in the hippocampus, thalamic and pretectal nuclei, substantia nigra, the dorsal part of the medulla, the cerebellum, in the olfactory nucleus, other cortical areas apart from hippocampus and the striatum. Indeed expression is confined in neuronal somata namely in the CA3 region and dentate gyrus of the hippocampus, caudate-putamen, parabranchial nucleus, olfactory nucleus, cortex, deep cerebellar nuclei and thalamus. Also highly expressed in the spleen. thymus and testis.

Functionally, may play a role in the process of differentiation and maturation of neuronal cells. May regulate the activity of TRIM17. Is a negative regulator of PAX6 expression. This chain is Tripartite motif-containing protein 44 (Trim44), found in Mus musculus (Mouse).